The following is a 90-amino-acid chain: NELL2-interacting cell ontogeny regulator 1 (90 aa).

Positions 1–28 (MAPALRSLLSPRTLLLLLLSLALLGARA) are cleaved as a signal peptide.

The protein belongs to the NICOL family. In terms of assembly, interacts with NELL2; triggers epididymal differentiation. Interacts with cell surface receptor TFRC; the interaction mediates uptake of NICOL1 into fibroblasts. In terms of tissue distribution, expression is enriched in both male and female reproductive organs, including the testis, epididymis, seminal vesicles, coagulating glands, ovary and uterus, and in various non-reproductive organs such as brain, thymus and liver. In testis, expressed in both germ cells and Sertoli cells. Also expressed at low levels in the kidney. Expressed during neocortex and cerebellum development.

The protein resides in the secreted. Its subcellular location is the cytoplasm. It is found in the perinuclear region. MRNA-binding protein which interacts with a range of target mRNAs including SERPINE1, ACTA2, CCN2 and COL4A1 and may promote extracellular matrix production. Binds to the 3'-UTR of SERPINE1 mRNA and stabilizes the mRNA, possibly by competing for binding with SERBP1 and preventing SERBP1-mediated mRNA degradation. Also binds to the 3'-UTR of ACTA2. Testis-derived lumicrine factor that triggers epididymal differentiation and sperm maturation. The polypeptide is NELL2-interacting cell ontogeny regulator 1 (Mus musculus (Mouse)).